The sequence spans 143 residues: Ribonuclease P protein component 2 (143 aa).

It belongs to the eukaryotic/archaeal RNase P protein component 2 family. In terms of assembly, consists of a catalytic RNA component and at least 4-5 protein subunits.

Its subcellular location is the cytoplasm. It catalyses the reaction Endonucleolytic cleavage of RNA, removing 5'-extranucleotides from tRNA precursor.. Functionally, part of ribonuclease P, a protein complex that generates mature tRNA molecules by cleaving their 5'-ends. The chain is Ribonuclease P protein component 2 from Saccharolobus solfataricus (strain ATCC 35092 / DSM 1617 / JCM 11322 / P2) (Sulfolobus solfataricus).